A 40-amino-acid chain; its full sequence is Photosystem II reaction center protein J (40 aa).

A helical membrane pass occupies residues 8-28 (IPLWLIGTLTGILVIGLIGIF).

This sequence belongs to the PsbJ family. In terms of assembly, PSII is composed of 1 copy each of membrane proteins PsbA, PsbB, PsbC, PsbD, PsbE, PsbF, PsbH, PsbI, PsbJ, PsbK, PsbL, PsbM, PsbT, PsbX, PsbY, PsbZ, Psb30/Ycf12, at least 3 peripheral proteins of the oxygen-evolving complex and a large number of cofactors. It forms dimeric complexes.

The protein localises to the plastid. It localises to the chloroplast thylakoid membrane. One of the components of the core complex of photosystem II (PSII). PSII is a light-driven water:plastoquinone oxidoreductase that uses light energy to abstract electrons from H(2)O, generating O(2) and a proton gradient subsequently used for ATP formation. It consists of a core antenna complex that captures photons, and an electron transfer chain that converts photonic excitation into a charge separation. The polypeptide is Photosystem II reaction center protein J (Phalaenopsis aphrodite subsp. formosana (Moth orchid)).